Here is a 210-residue protein sequence, read N- to C-terminus: Redox-sensing transcriptional repressor Rex (210 aa).

Residues 15–54 (LYYRIFKRFNTDGIEKASSKQIADALGIDSATVRRDFSYF) constitute a DNA-binding region (H-T-H motif). Residue 89-94 (GCGNIG) coordinates NAD(+).

This sequence belongs to the transcriptional regulatory Rex family. Homodimer.

The protein resides in the cytoplasm. Its function is as follows. Modulates transcription in response to changes in cellular NADH/NAD(+) redox state. The sequence is that of Redox-sensing transcriptional repressor Rex from Streptococcus agalactiae serotype Ia (strain ATCC 27591 / A909 / CDC SS700).